The primary structure comprises 534 residues: Serine/threonine-protein phosphatase 2B catalytic subunit (534 aa).

Fe cation-binding residues include D88, H90, and D116. 2 residues coordinate Zn(2+): D116 and N148. H149 functions as the Proton donor in the catalytic mechanism. 2 residues coordinate Zn(2+): H197 and H279. Disordered stretches follow at residues L375–S398 and P475–A534. Composition is skewed to basic and acidic residues over residues P475–Q497 and Q524–A534.

It belongs to the PPP phosphatase family. PP-2B subfamily. Composed of two components (A and B), the A component is the catalytic subunit and the B component confers calcium sensitivity. It depends on Fe(3+) as a cofactor. The cofactor is Zn(2+).

The catalysed reaction is O-phospho-L-seryl-[protein] + H2O = L-seryl-[protein] + phosphate. The enzyme catalyses O-phospho-L-threonyl-[protein] + H2O = L-threonyl-[protein] + phosphate. Functionally, calcium-dependent, calmodulin-stimulated protein phosphatase. This subunit may have a role in the calmodulin activation of calcineurin. In Aspergillus fumigatus (strain ATCC MYA-4609 / CBS 101355 / FGSC A1100 / Af293) (Neosartorya fumigata), this protein is Serine/threonine-protein phosphatase 2B catalytic subunit (cnaA).